The following is a 416-amino-acid chain: Kynureninase (416 aa).

Residues Thr97, Ser98, 129-132, Thr172, Asp201, His204, and Tyr226 each bind pyridoxal 5'-phosphate; that span reads FPTD. The residue at position 227 (Lys227) is an N6-(pyridoxal phosphate)lysine. The pyridoxal 5'-phosphate site is built by Trp256 and Thr282.

It belongs to the kynureninase family. Homodimer. Pyridoxal 5'-phosphate is required as a cofactor.

It carries out the reaction L-kynurenine + H2O = anthranilate + L-alanine + H(+). The catalysed reaction is 3-hydroxy-L-kynurenine + H2O = 3-hydroxyanthranilate + L-alanine + H(+). The protein operates within amino-acid degradation; L-kynurenine degradation; L-alanine and anthranilate from L-kynurenine: step 1/1. Its pathway is cofactor biosynthesis; NAD(+) biosynthesis; quinolinate from L-kynurenine: step 2/3. Catalyzes the cleavage of L-kynurenine (L-Kyn) and L-3-hydroxykynurenine (L-3OHKyn) into anthranilic acid (AA) and 3-hydroxyanthranilic acid (3-OHAA), respectively. In Pseudomonas fluorescens, this protein is Kynureninase.